We begin with the raw amino-acid sequence, 168 residues long: Photosystem I assembly protein Ycf3 (168 aa).

TPR repeat units lie at residues 35–68 (AFTYYRDGMSAQSEGNYAEALQNYYEAMRLEIDP), 72–105 (SYILYNIGLIHTSNGEHTKALEYYFRALERNPFL), and 120–153 (GEQAIRQGDSEIAEAWFDQAAEYWKQAMALTPGN).

The protein belongs to the Ycf3 family.

The protein resides in the plastid. It is found in the chloroplast thylakoid membrane. In terms of biological role, essential for the assembly of the photosystem I (PSI) complex. May act as a chaperone-like factor to guide the assembly of the PSI subunits. In Panax ginseng (Korean ginseng), this protein is Photosystem I assembly protein Ycf3.